Reading from the N-terminus, the 66-residue chain is Toxin Boma6e (66 aa).

One can recognise an LCN-type CS-alpha/beta domain in the interval 2–64; sequence RDAYIAQNYN…VPLKVQGKCH (63 aa). Intrachain disulfides connect C12-C63, C22-C46, and C26-C48.

Belongs to the long (3 C-C) scorpion toxin superfamily. In terms of processing, only three disulfide bridges can be formed, because only seven cysteines are present. Expressed by the venom gland.

It is found in the secreted. Its function is as follows. Binds voltage-independently at site-3 of sodium channels (Nav) and inhibits the inactivation of the activated channels, thereby blocking neuronal transmission. The protein is Toxin Boma6e of Buthus occitanus mardochei (Moroccan scorpion).